Reading from the N-terminus, the 944-residue chain is MTQLASSYDPSSFESRLYAQWESAGHFKPSGSGEPYTVLLPPPNVTGTLHMGHAFQQTLMDALVRYHRMRGYDTLWQVGTDHAGIATEMVVSRNLALEGKGETRDTLGREGFIAKVWEWKAQSGDTIERQMRRLGTSSDWSRSTFTMDPQPSAAVTEAFVRWYEQGLIYRGQRLVNWDPVLKTAISDLEVENVEEDGFLWSIRYPLADGVTYEHVEHDADGVETLRETRDYLVVATTRPETMLGDTAVMVHPDDARYATLHAAQIVLPLTGRLVPVITDDYVDRAFGTGVVKVTPAHDFNDYQVGVRHDLPLINLFTVTAAINDNAPERYRGLDRYDARKLVLSELEDLGLLVETKPHKLQVPRGDRTGQVIEPYLTDQWFVKMDALAKRGLELVESGQVKFVPPNWINTYRHWMENIQDWCISRQLWWGHRIPAWFDEAGKCYVGHDEAQVRATHGLGAEVALHQDSDVLETWFSSQLWPFSTLGWPDAQAMDERGFARYLPSSVLVTGFDIIFFWVARMIMATDSFTGQVPFRDVYITGLIRDAQGQKMSKSKGNVLDPLDIIDGISIEDLVAKRTSGLMQPRMAEKIEKATRKEFPDGIIAHGADALRFTIAALATHGRDIKFDLGRAEGYKNFCNKLWNATRFALMNTEGAQFSGVPQPQTETERWILARLDAVAAEAQAHYANYRFDLLAQTLYEFAWNAFCDWFVELAKPALNGAVQDAADSTRHTLLYVLEALLRLLHPLTPFVTEELWQQVAPRLGITGDTISLQAFPQRGDVDTSGYAGAEADIEWLKAMVSALRRVRSELNVPPSKQVRLWLQAGSSDDRARVARFASQLAFLLKLEAIDWLAAGQEAPPAAAAIVGELTLLVPLEGLVDMDAERTRLDKEIKRVESEIGKCNGKLGNATFVQNAPAAVVEQERARLNDWTTQLTGLREQRAKL.

Residues 43–53 (PNVTGTLHMGH) carry the 'HIGH' region motif. Residues 550–554 (KMSKS) carry the 'KMSKS' region motif. Lys553 lines the ATP pocket. A coiled-coil region spans residues 878–944 (LVDMDAERTR…TGLREQRAKL (67 aa)).

It belongs to the class-I aminoacyl-tRNA synthetase family. ValS type 1 subfamily. As to quaternary structure, monomer.

The protein localises to the cytoplasm. The catalysed reaction is tRNA(Val) + L-valine + ATP = L-valyl-tRNA(Val) + AMP + diphosphate. Functionally, catalyzes the attachment of valine to tRNA(Val). As ValRS can inadvertently accommodate and process structurally similar amino acids such as threonine, to avoid such errors, it has a 'posttransfer' editing activity that hydrolyzes mischarged Thr-tRNA(Val) in a tRNA-dependent manner. In Xanthomonas campestris pv. campestris (strain B100), this protein is Valine--tRNA ligase.